The chain runs to 873 residues: MQDKYLPSAVEQAAQQHWQAIDAYRVPEHATGPDGKEKPKFYACSMLPYPSGKLHMGHVRNYTINDVMARYLRMNGNNVLMPMGWDAFGMPAENAALNNGVAPAAWTYDNIAYMKKQMQSMGLAIDWSREVATCSPDYYRWNQWLFLKMLEKGIAYRKTGTVNWDPVDQTVLANEQVIDGRGWRSGAIVEKREIPMYYLRITDYAEELLGDLDGLGWPERVKIMQQNWIGKSVGVRFAFKHDIEGDDGQLINDGKLYVFTTRADTIMGVTFCAVAAEHPLATHAAANNPELAAFIDECKHGSVMEADMATMEKKGMPTGLQVTHPLTGEQVDVWVGNYVLMSYGDGAVMGVPAHDERDFAFANKYKLPIRQVIDVKGQPYSTEAWQEWYGDKENGVCIESGKYNGLGYLAAVEAIAADLGAMGLGEKKITWRLRDWGISRQRYWGTPIPLIHCDSCGVVPVPEQDLPVVLPEDLVPDGTGNPLNKDPRFLQCSCPSCGKPARRETDTMDTFIDSCWYYMRYTCPDAATMVDARNDYWMPMDQYIGGIEHAILHLLYARFWTKVMRDLGLVKFDEPFTNLLTQGMVLNETFYREDAAGKKTWYNPADVDVQTDDRGRPVGATLKADGQPVVIGGVEKMSKSKNNGIDPQALIDQHGADTARLFVMFAAPPEQQLEWSGSGVEGASRFLRRVWNYGFANAAAVRDGAGAAPTADDADLRREIHGVLKQANYDYQRIQYNTVVSATMKMLNALEDAKNASPVARRECFGILLRVLYPVVPHITHGLWDALGYATQYGDLLDAPWPQVDEGALVRTEIEMVLQINGKVRGSVTVPADADRAAIETAAAASETVAKFAEGKAPKKIVVVPGRLVNVVL.

The 'HIGH' region signature appears at 48–58 (PYPSGKLHMGH). Positions 636–640 (KMSKS) match the 'KMSKS' region motif. Lysine 639 lines the ATP pocket.

Belongs to the class-I aminoacyl-tRNA synthetase family.

It localises to the cytoplasm. The enzyme catalyses tRNA(Leu) + L-leucine + ATP = L-leucyl-tRNA(Leu) + AMP + diphosphate. This chain is Leucine--tRNA ligase, found in Cupriavidus pinatubonensis (strain JMP 134 / LMG 1197) (Cupriavidus necator (strain JMP 134)).